The following is a 482-amino-acid chain: Peptide chain release factor PrfB2, chloroplastic (482 aa).

The transit peptide at Met1 to Ser21 directs the protein to the chloroplast.

Belongs to the prokaryotic/mitochondrial release factor family.

It localises to the plastid. It is found in the chloroplast stroma. Functionally, directs the termination of translation in response to the peptide chain termination codon UGA. Required for the proper translation, stability and normal processing of UGA-containing polycistronic transcripts in chloroplasts. The polypeptide is Peptide chain release factor PrfB2, chloroplastic (Arabidopsis thaliana (Mouse-ear cress)).